Here is a 154-residue protein sequence, read N- to C-terminus: Ribonuclease H (154 aa).

The RNase H type-1 domain maps to 1-142; that stretch reads MTPKLVIYTD…ADELARLGML (142 aa). Mg(2+)-binding residues include Asp10, Glu48, Asp70, and Asp134.

The protein belongs to the RNase H family. In terms of assembly, monomer. The cofactor is Mg(2+).

The protein resides in the cytoplasm. The catalysed reaction is Endonucleolytic cleavage to 5'-phosphomonoester.. Functionally, endonuclease that specifically degrades the RNA of RNA-DNA hybrids. This is Ribonuclease H from Caulobacter sp. (strain K31).